The chain runs to 285 residues: 1-deoxypentalenic acid 11-beta-hydroxylase (285 aa).

R117 provides a ligand contact to substrate. The Fe cation site is built by H137 and D139. Residues 137–139 and W153 contribute to the 2-oxoglutarate site; that span reads HQD. R188 is a binding site for substrate. Position 226 (H226) interacts with Fe cation. Residues S228 and R240 each coordinate 2-oxoglutarate.

It belongs to the PhyH family. Fe cation is required as a cofactor. Requires L-ascorbate as cofactor.

The catalysed reaction is 1-deoxypentalenate + 2-oxoglutarate + O2 = 1-deoxy-11beta-hydroxypentalenate + succinate + CO2. It participates in antibiotic biosynthesis; neopentalenolactone biosynthesis. Its function is as follows. Catalyzes the conversion of 1-deoxypentalenic acid to 11-beta-hydroxy-1-deoxypentalenic acid in the biosynthesis of neopentalenolactone antibiotic. In Streptomyces avermitilis (strain ATCC 31267 / DSM 46492 / JCM 5070 / NBRC 14893 / NCIMB 12804 / NRRL 8165 / MA-4680), this protein is 1-deoxypentalenic acid 11-beta-hydroxylase (ptlH).